Reading from the N-terminus, the 267-residue chain is Probable membrane transporter protein MJ0441 (267 aa).

Helical transmembrane passes span 10 to 30 (LLLL…GSLF), 31 to 51 (GIGG…YFGI), 55 to 75 (VKFA…ISIF), 87 to 107 (ASIT…FLVV), 158 to 178 (FLSG…LAMA), 185 to 205 (AVAI…ISYL), and 213 to 233 (IYNI…PIIY).

This sequence belongs to the 4-toluene sulfonate uptake permease (TSUP) (TC 2.A.102) family.

It is found in the cell membrane. In Methanocaldococcus jannaschii (strain ATCC 43067 / DSM 2661 / JAL-1 / JCM 10045 / NBRC 100440) (Methanococcus jannaschii), this protein is Probable membrane transporter protein MJ0441.